The chain runs to 305 residues: Ribosomal RNA small subunit methyltransferase H (305 aa).

Residues 49 to 51 (GGH), Asp68, Phe100, Asp116, and Gln123 each bind S-adenosyl-L-methionine.

This sequence belongs to the methyltransferase superfamily. RsmH family.

Its subcellular location is the cytoplasm. The enzyme catalyses cytidine(1402) in 16S rRNA + S-adenosyl-L-methionine = N(4)-methylcytidine(1402) in 16S rRNA + S-adenosyl-L-homocysteine + H(+). Specifically methylates the N4 position of cytidine in position 1402 (C1402) of 16S rRNA. The protein is Ribosomal RNA small subunit methyltransferase H of Synechocystis sp. (strain ATCC 27184 / PCC 6803 / Kazusa).